Here is a 63-residue protein sequence, read N- to C-terminus: Omega-conotoxin Eu1.6 (63 aa).

A signal peptide spans 1 to 21 (MGMRMMFTVFLLVVLATTVVS). Positions 22 to 47 (FTSDRAPDGRNAAAKAFGLITPTVRK) are excised as a propeptide. 2 cysteine pairs are disulfide-bonded: cysteine 49/cysteine 55 and cysteine 50/cysteine 63. A ser-Xaa-Pro motif, crucial for potent interaction with nAChR region spans residues 51–53 (SNP).

Belongs to the conotoxin A superfamily. In terms of tissue distribution, expressed by the venom duct.

It is found in the secreted. In terms of biological role, this amidated peptide potently and teversibly inhibits Cav2.2/CACNA1B. Steady-state inactivation is enhanced at hyperpolarized membrane potentials. Also shows a weak interaction at alpha-3-beta-4/ CHRNA3-CHRNB4 and alpha-7/CHRNA7 nAChRs subtypes. In vivo, exhibits a potent analgesic activity in rat partial sciatic nerve injury and chronic constriction injury models. The protein is Omega-conotoxin Eu1.6 of Conus eburneus (Ivory cone).